Reading from the N-terminus, the 212-residue chain is RNA chaperone ProQ (212 aa).

Residues 114 to 149 are disordered; sequence RIAKAGKTSAPAANAKKPVKKPVARRPKAAPSAKPV. Over residues 118-129 the composition is skewed to low complexity; sequence AGKTSAPAANAK. Residues 130 to 141 show a composition bias toward basic residues; it reads KPVKKPVARRPK.

The protein belongs to the ProQ family.

The protein localises to the cytoplasm. In terms of biological role, RNA chaperone with significant RNA binding, RNA strand exchange and RNA duplexing activities. The chain is RNA chaperone ProQ from Shewanella piezotolerans (strain WP3 / JCM 13877).